The primary structure comprises 119 residues: Large ribosomal subunit protein bL19 (119 aa).

The protein belongs to the bacterial ribosomal protein bL19 family.

In terms of biological role, this protein is located at the 30S-50S ribosomal subunit interface and may play a role in the structure and function of the aminoacyl-tRNA binding site. The polypeptide is Large ribosomal subunit protein bL19 (Sulfurovum sp. (strain NBC37-1)).